Here is a 302-residue protein sequence, read N- to C-terminus: Capsid protein (302 aa).

The tract at residues 217–302 (FHSGDAAKQS…HSSPQQTPKK (86 aa)) is disordered. The span at 254-271 (PRAGTPSSQKSGQSGQTT) shows a compositional bias: low complexity. Residues 288–302 (HKSTPHSSPQQTPKK) are compositionally biased toward polar residues.

Its subcellular location is the virion. Its function is as follows. Capsid protein self-assembles to form a flexuous, filamentous capsid (Potential). The capsid encapsulates the single-stranded RNA genome. This is Capsid protein from Botryotinia fuckeliana (Noble rot fungus).